Reading from the N-terminus, the 455-residue chain is ATP-dependent protease ATPase subunit HslU (455 aa).

ATP is bound by residues Ile-19, Gly-61–Glu-66, Asp-268, Glu-333, and Arg-405.

It belongs to the ClpX chaperone family. HslU subfamily. A double ring-shaped homohexamer of HslV is capped on each side by a ring-shaped HslU homohexamer. The assembly of the HslU/HslV complex is dependent on binding of ATP.

It is found in the cytoplasm. Its function is as follows. ATPase subunit of a proteasome-like degradation complex; this subunit has chaperone activity. The binding of ATP and its subsequent hydrolysis by HslU are essential for unfolding of protein substrates subsequently hydrolyzed by HslV. HslU recognizes the N-terminal part of its protein substrates and unfolds these before they are guided to HslV for hydrolysis. This Francisella philomiragia subsp. philomiragia (strain ATCC 25017 / CCUG 19701 / FSC 153 / O#319-036) protein is ATP-dependent protease ATPase subunit HslU.